Reading from the N-terminus, the 432-residue chain is Alcohol acyltransferase 9 (432 aa).

Catalysis depends on proton acceptor residues His156 and Asp379.

This sequence belongs to the plant acyltransferase family. As to expression, expressed in fruit.

It catalyses the reaction 2-(methylsulfanyl)acetyl-CoA + butan-1-ol = butyl 2-(methylsulfanyl)acetate + CoA. The catalysed reaction is ethanol + acetyl-CoA = ethyl acetate + CoA. The enzyme catalyses butan-1-ol + acetyl-CoA = butyl acetate + CoA. It carries out the reaction butan-1-ol + propanoyl-CoA = butyl propanoate + CoA. Functionally, involved in the biosynthesis of volatile esters which confer kiwifruit flavor. Alcohol acyl transferase that can use a wide range of alcohols as substrate to produce esters. Exhibits acetyl-CoA:alcohol O-acyltransferase activity. The sequence is that of Alcohol acyltransferase 9 from Actinidia eriantha (Velvet vine).